The following is a 581-amino-acid chain: Putative adenine deaminase BH0637 (581 aa).

This sequence belongs to the metallo-dependent hydrolases superfamily. Adenine deaminase family.

It catalyses the reaction adenine + H2O + H(+) = hypoxanthine + NH4(+). The polypeptide is Putative adenine deaminase BH0637 (Halalkalibacterium halodurans (strain ATCC BAA-125 / DSM 18197 / FERM 7344 / JCM 9153 / C-125) (Bacillus halodurans)).